Here is a 103-residue protein sequence, read N- to C-terminus: MYAVVKTGGKQYKVAAGEKLKVEQIPADIGAEITLDQVLAVGAGDQIKFGTPLVSGASVKATVISQGRHDKVKIFKMRRRKHYQKRQGHRQNYTELRIEAINA.

It belongs to the bacterial ribosomal protein bL21 family. In terms of assembly, part of the 50S ribosomal subunit. Contacts protein L20.

In terms of biological role, this protein binds to 23S rRNA in the presence of protein L20. This is Large ribosomal subunit protein bL21 from Cupriavidus pinatubonensis (strain JMP 134 / LMG 1197) (Cupriavidus necator (strain JMP 134)).